A 95-amino-acid chain; its full sequence is Co-chaperonin GroES (95 aa).

This sequence belongs to the GroES chaperonin family. In terms of assembly, heptamer of 7 subunits arranged in a ring. Interacts with the chaperonin GroEL.

The protein localises to the cytoplasm. Its function is as follows. Together with the chaperonin GroEL, plays an essential role in assisting protein folding. The GroEL-GroES system forms a nano-cage that allows encapsulation of the non-native substrate proteins and provides a physical environment optimized to promote and accelerate protein folding. GroES binds to the apical surface of the GroEL ring, thereby capping the opening of the GroEL channel. The chain is Co-chaperonin GroES from Cereibacter sphaeroides (strain ATCC 17025 / ATH 2.4.3) (Rhodobacter sphaeroides).